The following is a 377-amino-acid chain: Queuine tRNA-ribosyltransferase (377 aa).

The active-site Proton acceptor is aspartate 93. Substrate contacts are provided by residues 93-97, aspartate 147, glutamine 191, and glycine 218; that span reads DSGGF. Residues 249-255 are RNA binding; it reads GVGTPLD. The Nucleophile role is filled by aspartate 268. Residues 273–277 are RNA binding; important for wobble base 34 recognition; the sequence is TRNAR. 4 residues coordinate Zn(2+): cysteine 306, cysteine 308, cysteine 311, and histidine 337.

It belongs to the queuine tRNA-ribosyltransferase family. Homodimer. Within each dimer, one monomer is responsible for RNA recognition and catalysis, while the other monomer binds to the replacement base PreQ1. The cofactor is Zn(2+).

The enzyme catalyses 7-aminomethyl-7-carbaguanine + guanosine(34) in tRNA = 7-aminomethyl-7-carbaguanosine(34) in tRNA + guanine. Its pathway is tRNA modification; tRNA-queuosine biosynthesis. Catalyzes the base-exchange of a guanine (G) residue with the queuine precursor 7-aminomethyl-7-deazaguanine (PreQ1) at position 34 (anticodon wobble position) in tRNAs with GU(N) anticodons (tRNA-Asp, -Asn, -His and -Tyr). Catalysis occurs through a double-displacement mechanism. The nucleophile active site attacks the C1' of nucleotide 34 to detach the guanine base from the RNA, forming a covalent enzyme-RNA intermediate. The proton acceptor active site deprotonates the incoming PreQ1, allowing a nucleophilic attack on the C1' of the ribose to form the product. After dissociation, two additional enzymatic reactions on the tRNA convert PreQ1 to queuine (Q), resulting in the hypermodified nucleoside queuosine (7-(((4,5-cis-dihydroxy-2-cyclopenten-1-yl)amino)methyl)-7-deazaguanosine). In Oleidesulfovibrio alaskensis (strain ATCC BAA-1058 / DSM 17464 / G20) (Desulfovibrio alaskensis), this protein is Queuine tRNA-ribosyltransferase.